Here is a 332-residue protein sequence, read N- to C-terminus: UDP-3-O-acylglucosamine N-acyltransferase (332 aa).

H235 functions as the Proton acceptor in the catalytic mechanism.

The protein belongs to the transferase hexapeptide repeat family. LpxD subfamily. Homotrimer.

The enzyme catalyses a UDP-3-O-[(3R)-3-hydroxyacyl]-alpha-D-glucosamine + a (3R)-hydroxyacyl-[ACP] = a UDP-2-N,3-O-bis[(3R)-3-hydroxyacyl]-alpha-D-glucosamine + holo-[ACP] + H(+). It participates in bacterial outer membrane biogenesis; LPS lipid A biosynthesis. Functionally, catalyzes the N-acylation of UDP-3-O-acylglucosamine using 3-hydroxyacyl-ACP as the acyl donor. Is involved in the biosynthesis of lipid A, a phosphorylated glycolipid that anchors the lipopolysaccharide to the outer membrane of the cell. This is UDP-3-O-acylglucosamine N-acyltransferase from Fusobacterium nucleatum subsp. nucleatum (strain ATCC 25586 / DSM 15643 / BCRC 10681 / CIP 101130 / JCM 8532 / KCTC 2640 / LMG 13131 / VPI 4355).